A 383-amino-acid polypeptide reads, in one-letter code: Adaptive-response sensory kinase SasA (383 aa).

The Histidine kinase domain maps to 161–383; it reads MLAHDLRSPL…SFHFTLPVYR (223 aa). His164 bears the Phosphohistidine; by autocatalysis mark.

As to quaternary structure, homooligomerizes. Interacts with KaiC1. Interacts with KaiC1 and RpaA. Binds to the B-loop in the CI domain of KaiC; SasA and KaiB compete to bind to the CI domain.

The enzyme catalyses ATP + protein L-histidine = ADP + protein N-phospho-L-histidine.. Member of the two-component regulatory system SasA/RpaA involved in genome-wide circadian gene expression. One of several clock output pathways. Participates in the Kai clock protein complex, the main circadian regulator in cyanobacteria, via its interaction with KaiC. KaiC enhances the autophosphorylation activity of SasA, which then transfers its phosphate group to RpaA to activate it. In addition to its output function, recruits fold-shifted KaiB (KaiB(fs)) to KaiC to cooperatively form the KaiB(6):KaiC(6) complex (independent of SasA kinase activity). Required for robustness of the circadian rhythm of gene expression and is involved in clock output, also required for adaptation to light/dark cycles. In terms of biological role, plays an important role in glucose metabolism, important for expression of genes involved in glycolysis, gluconeogenesis, the oxidative pentose phosphate pathway, and glycogen metabolism. Required for heterotrophic growth. Overexpression from the psbAII promoter leads to altered levels of genes involved in carbon metabolism, increased levels of transcripts for clock oscillator genes in the light and the dark, complete loss of glycogen accumulation, decreased levels of metabolites of sugar catabolism and increased levels of amino acids in the light and increased levels of SigE protein. The protein is Adaptive-response sensory kinase SasA of Synechocystis sp. (strain ATCC 27184 / PCC 6803 / Kazusa).